A 230-amino-acid chain; its full sequence is 3-beta-hydroxysteroid-Delta(8),Delta(7)-isomerase (230 aa).

The residue at position 2 (T2) is an N-acetylthreonine. 4 helical membrane-spanning segments follow: residues 29–49 (SHILVGLFSISGGLIVITWLL), 66–86 (LCWFAVCTFIHLVIEGWFSLY), 121–141 (METVTACLWGPLSLWVVIAFL), and 185–205 (FWFYFVFLNAVWLVIPSILVL). Positions 61-204 (GRRLALCWFA…VWLVIPSILV (144 aa)) constitute an EXPERA domain.

This sequence belongs to the EBP family.

The protein resides in the endoplasmic reticulum membrane. It is found in the nucleus envelope. It localises to the cytoplasmic vesicle. The catalysed reaction is lathosterol = 5alpha-cholest-8-en-3beta-ol. The enzyme catalyses zymosterol = 5alpha-cholesta-7,24-dien-3beta-ol. It catalyses the reaction 5,6alpha-epoxy-5alpha-cholestan-3beta-ol + H2O = 5alpha-cholestane-3beta,5,6beta-triol. It carries out the reaction 5,6beta-epoxy-5beta-cholestan-3beta-ol + H2O = 5alpha-cholestane-3beta,5,6beta-triol. Its pathway is steroid biosynthesis; cholesterol biosynthesis. Functionally, isomerase that catalyzes the conversion of Delta(8)-sterols to their corresponding Delta(7)-isomers. Its function is as follows. Component of the microsomal antiestrogen binding site (AEBS), a multiproteic complex at the ER membrane that consists of an association between EBP and 7-dehydrocholesterol reductase/DHCR7. This complex is responsible for cholesterol-5,6-epoxide hydrolase (ChEH) activity, which consists in the hydration of cholesterol-5,6-epoxides (5,6-EC) into cholestane-3beta,5alpha,6beta-triol (CT). The precise role of each component of this complex has not been described yet. The sequence is that of 3-beta-hydroxysteroid-Delta(8),Delta(7)-isomerase from Mus musculus (Mouse).